A 257-amino-acid polypeptide reads, in one-letter code: THAP domain-containing protein 10 (257 aa).

A THAP-type zinc finger spans residues 1–90; sequence MPARCVAAHC…LVAGAVPTLH (90 aa). Positions 154–168 are enriched in polar residues; sequence QPHADNPSNTVTSVP. The segment at 154-178 is disordered; sequence QPHADNPSNTVTSVPTHCEEGPVHK.

The protein is THAP domain-containing protein 10 (THAP10) of Homo sapiens (Human).